Here is a 240-residue protein sequence, read N- to C-terminus: UDP-2,3-diacylglucosamine hydrolase (240 aa).

Residues Asp-9, His-11, Asp-43, Asn-81, and His-116 each coordinate Mn(2+). Position 81-82 (81-82 (NR)) interacts with substrate. Positions 124, 162, 166, 169, and 197 each coordinate substrate. Residues His-197 and His-199 each coordinate Mn(2+).

The protein belongs to the LpxH family. Mn(2+) serves as cofactor.

The protein localises to the cell inner membrane. It carries out the reaction UDP-2-N,3-O-bis[(3R)-3-hydroxytetradecanoyl]-alpha-D-glucosamine + H2O = 2-N,3-O-bis[(3R)-3-hydroxytetradecanoyl]-alpha-D-glucosaminyl 1-phosphate + UMP + 2 H(+). Its pathway is glycolipid biosynthesis; lipid IV(A) biosynthesis; lipid IV(A) from (3R)-3-hydroxytetradecanoyl-[acyl-carrier-protein] and UDP-N-acetyl-alpha-D-glucosamine: step 4/6. Hydrolyzes the pyrophosphate bond of UDP-2,3-diacylglucosamine to yield 2,3-diacylglucosamine 1-phosphate (lipid X) and UMP by catalyzing the attack of water at the alpha-P atom. Involved in the biosynthesis of lipid A, a phosphorylated glycolipid that anchors the lipopolysaccharide to the outer membrane of the cell. The protein is UDP-2,3-diacylglucosamine hydrolase of Neisseria meningitidis serogroup B (strain ATCC BAA-335 / MC58).